The primary structure comprises 577 residues: MLKRSFDKSKLPSRHVTEGPSRAPHRSYYYAMGMTEEEIHQPLVGVATCWNEAAPCNIALSRQAQAVKMGVKQASGTPREFTTITVTDGIAMGHEGMRSSLASREAIADTVELTMRGHCYDAIVGLAGCDKSLPGMMMAMVRLNVPSVFIYGGSILPGRLNGEDVTVQDVFEAVGKHQAGNYTDAELEVLERVACPSAGACGGQFTANTMACVSEAIGLALPNSAGAPAPYESRDQYGEASGRAVMDLIEKGIRARDIVTRKSLENAARIVACTGGSTNAGLHLPAIAHEAGIEFTLQDVCDIFRDTPYFVDLKPGGKYVAKDMYEAGGVPVVMRELRRAGLIHEDCMTVTGYSIGEELDKVTLEADGRVIYPVDTPLSTTGGVVGLEGNLAPEGAIVKIAGMSDDQLVFTGPARVFECEEDAFEAVQNRAYAEGDVFVIRNEGPAGGPGMREMLATTAALSGQGMGKKVALITDGRFSGATRGFCVGHVGPEAAHGGPIAMLKDGDMITIDALKGELSVALSEDELAARKDAWSGPRETIYASGALWKYAQLVGGARLGAVTHPGAKDEKHIYADL.

Residues 1–10 (MLKRSFDKSK) are compositionally biased toward basic and acidic residues. The tract at residues 1–22 (MLKRSFDKSKLPSRHVTEGPSR) is disordered. Cys-56 provides a ligand contact to [2Fe-2S] cluster. A Mg(2+)-binding site is contributed by Asp-88. A [2Fe-2S] cluster-binding site is contributed by Cys-129. Mg(2+) contacts are provided by Asp-130 and Lys-131. Lys-131 is subject to N6-carboxylysine. Cys-201 lines the [2Fe-2S] cluster pocket. Residue Glu-453 coordinates Mg(2+). Ser-479 functions as the Proton acceptor in the catalytic mechanism.

This sequence belongs to the IlvD/Edd family. In terms of assembly, homodimer. [2Fe-2S] cluster serves as cofactor. Mg(2+) is required as a cofactor.

The enzyme catalyses (2R)-2,3-dihydroxy-3-methylbutanoate = 3-methyl-2-oxobutanoate + H2O. It catalyses the reaction (2R,3R)-2,3-dihydroxy-3-methylpentanoate = (S)-3-methyl-2-oxopentanoate + H2O. It functions in the pathway amino-acid biosynthesis; L-isoleucine biosynthesis; L-isoleucine from 2-oxobutanoate: step 3/4. The protein operates within amino-acid biosynthesis; L-valine biosynthesis; L-valine from pyruvate: step 3/4. Its function is as follows. Functions in the biosynthesis of branched-chain amino acids. Catalyzes the dehydration of (2R,3R)-2,3-dihydroxy-3-methylpentanoate (2,3-dihydroxy-3-methylvalerate) into 2-oxo-3-methylpentanoate (2-oxo-3-methylvalerate) and of (2R)-2,3-dihydroxy-3-methylbutanoate (2,3-dihydroxyisovalerate) into 2-oxo-3-methylbutanoate (2-oxoisovalerate), the penultimate precursor to L-isoleucine and L-valine, respectively. The sequence is that of Dihydroxy-acid dehydratase from Dinoroseobacter shibae (strain DSM 16493 / NCIMB 14021 / DFL 12).